The chain runs to 252 residues: Major prion protein (252 aa).

The N-terminal stretch at 1-22 is a signal peptide; sequence MANLGYWMLVLFVATWSDLGLC. Positions 23–229 are interaction with GRB2, ERI3 and SYN1; the sequence is KKRPKPGGWN…ESQAYYQRGS (207 aa). A disordered region spans residues 26–104; that stretch reads PKPGGWNTGG…HNQWNKPSKP (79 aa). A run of 5 repeats spans residues 51–58, 59–66, 67–74, 75–82, and 83–90. The segment at 51–90 is 5 X 8 AA tandem repeats of P-H-G-G-G-W-G-Q; that stretch reads PQGGGWGQPHGGGWGQPHGGGWGQPHGGGWGQPHGGGWGQ. A compositionally biased stretch (gly residues) spans 52–92; it reads QGGGWGQPHGGGWGQPHGGGWGQPHGGGWGQPHGGGWGQAG. H60, G61, G62, H68, G69, G70, H76, G77, G78, H84, G85, and G86 together coordinate Cu(2+). C178 and C213 are joined by a disulfide. N-linked (GlcNAc...) asparagine glycans are attached at residues N180 and N196. Residue S229 is the site of GPI-anchor amidated serine attachment. The propeptide at 230-252 is removed in mature form; it reads SMVLFSSPPVILLISFLIFLIVG.

The protein belongs to the prion family. In terms of assembly, monomer and homodimer. Has a tendency to aggregate into amyloid fibrils containing a cross-beta spine, formed by a steric zipper of superposed beta-strands. Soluble oligomers may represent an intermediate stage on the path to fibril formation. Copper binding may promote oligomerization. Interacts with GRB2, APP, ERI3/PRNPIP and SYN1. Mislocalized cytosolically exposed PrP interacts with MGRN1; this interaction alters MGRN1 subcellular location and causes lysosomal enlargement. Interacts with KIAA1191.

The protein resides in the cell membrane. Its subcellular location is the golgi apparatus. Its function is as follows. Its primary physiological function is unclear. Has cytoprotective activity against internal or environmental stresses. May play a role in neuronal development and synaptic plasticity. May be required for neuronal myelin sheath maintenance. May play a role in iron uptake and iron homeostasis. Soluble oligomers are toxic to cultured neuroblastoma cells and induce apoptosis (in vitro). Association with GPC1 (via its heparan sulfate chains) targets PRNP to lipid rafts. Also provides Cu(2+) or Zn(2+) for the ascorbate-mediated GPC1 deaminase degradation of its heparan sulfate side chains. In Ateles paniscus (Black spider monkey), this protein is Major prion protein (PRNP).